A 241-amino-acid chain; its full sequence is Ribonuclease PH (241 aa).

Residues arginine 89 and 127–129 (GTR) each bind phosphate.

Belongs to the RNase PH family. In terms of assembly, homohexameric ring arranged as a trimer of dimers.

The catalysed reaction is tRNA(n+1) + phosphate = tRNA(n) + a ribonucleoside 5'-diphosphate. Phosphorolytic 3'-5' exoribonuclease that plays an important role in tRNA 3'-end maturation. Removes nucleotide residues following the 3'-CCA terminus of tRNAs; can also add nucleotides to the ends of RNA molecules by using nucleoside diphosphates as substrates, but this may not be physiologically important. Probably plays a role in initiation of 16S rRNA degradation (leading to ribosome degradation) during starvation. The sequence is that of Ribonuclease PH from Xanthomonas campestris pv. campestris (strain 8004).